Reading from the N-terminus, the 419-residue chain is GTPase Obg (419 aa).

One can recognise an Obg domain in the interval 1–158; it reads MHFVDEAFNE…FKIKTELKVL (158 aa). Positions 159–324 constitute an OBG-type G domain; sequence ADIGLLGFPS…LKYKMSSFLQ (166 aa). GTP-binding positions include 165–172, 190–194, 211–214, 278–281, and 305–307; these read GFPSVGKS, FTTIK, DLPG, NKMD, and SLV. The Mg(2+) site is built by Ser172 and Thr192. Residues 342 to 419 enclose the OCT domain; that stretch reads TLTDNLKTIS…KICDRLFDFL (78 aa).

It belongs to the TRAFAC class OBG-HflX-like GTPase superfamily. OBG GTPase family. As to quaternary structure, monomer. The cofactor is Mg(2+).

It is found in the cytoplasm. In terms of biological role, an essential GTPase which binds GTP, GDP and possibly (p)ppGpp with moderate affinity, with high nucleotide exchange rates and a fairly low GTP hydrolysis rate. Plays a role in control of the cell cycle, stress response, ribosome biogenesis and in those bacteria that undergo differentiation, in morphogenesis control. The chain is GTPase Obg from Aster yellows witches'-broom phytoplasma (strain AYWB).